The following is a 581-amino-acid chain: Arginine--tRNA ligase (581 aa).

The 'HIGH' region motif lies at 126 to 136; the sequence is PNLAKEMHVGH.

Belongs to the class-I aminoacyl-tRNA synthetase family. As to quaternary structure, monomer.

It is found in the cytoplasm. It catalyses the reaction tRNA(Arg) + L-arginine + ATP = L-arginyl-tRNA(Arg) + AMP + diphosphate. The polypeptide is Arginine--tRNA ligase (Shewanella baltica (strain OS155 / ATCC BAA-1091)).